The following is a 1249-amino-acid chain: Protein STU1 (1249 aa).

Low complexity-rich tracts occupy residues 138–156 and 555–574; these read LNSS…TATK and AASP…PSSA. Disordered regions lie at residues 138–161, 545–619, 644–718, 755–846, 860–891, and 1084–1118; these read LNSS…KPHE, KQLE…NPVF, HVET…LGLG, AEHE…NGNI, AFQT…RPEA, and HPAP…EKRT. The span at 581-600 shows a compositional bias: basic and acidic residues; the sequence is KKMDLKAMLAERRRAVKEAG. 2 stretches are compositionally biased toward low complexity: residues 647–667 and 708–718; these read TSSP…RIRP and SPSLSPSLGLG. Residues 755–774 are compositionally biased toward basic and acidic residues; the sequence is AEHEVDELTLKEGQKTRDDG. Polar residues-rich tracts occupy residues 809–822, 831–844, and 863–878; these read QQGN…SGRV, ATGT…SRNG, and TPLN…SSAI. Over residues 1089–1111 the composition is skewed to low complexity; sequence SSSADNSDPMTSALSQLSLSSSK.

It belongs to the CLASP family. In terms of assembly, interacts with microtubules.

Its subcellular location is the cytoplasm. The protein resides in the cytoskeleton. It localises to the nucleus. It is found in the spindle. In terms of biological role, microtubule binding protein that promotes the stabilization of dynamic microtubules. Required for mitotic spindle formation. The chain is Protein STU1 (STU1) from Cryptococcus neoformans var. neoformans serotype D (strain JEC21 / ATCC MYA-565) (Filobasidiella neoformans).